Consider the following 454-residue polypeptide: tRNA modification GTPase MnmE (454 aa).

(6S)-5-formyl-5,6,7,8-tetrahydrofolate is bound by residues arginine 23, glutamate 80, and lysine 120. The 162-residue stretch at 216–377 (GMKVVIAGRP…LRDHLKQSMG (162 aa)) folds into the TrmE-type G domain. Asparagine 226 contacts K(+). Residues 226–231 (NAGKSS), 245–251 (TDIAGTT), 270–273 (DTAG), 335–338 (NKAD), and 358–360 (SAR) each bind GTP. Residue serine 230 participates in Mg(2+) binding. 3 residues coordinate K(+): threonine 245, isoleucine 247, and threonine 250. Threonine 251 contributes to the Mg(2+) binding site. Position 454 (lysine 454) interacts with (6S)-5-formyl-5,6,7,8-tetrahydrofolate.

This sequence belongs to the TRAFAC class TrmE-Era-EngA-EngB-Septin-like GTPase superfamily. TrmE GTPase family. Homodimer. Heterotetramer of two MnmE and two MnmG subunits. K(+) is required as a cofactor.

Its subcellular location is the cytoplasm. Functionally, exhibits a very high intrinsic GTPase hydrolysis rate. Involved in the addition of a carboxymethylaminomethyl (cmnm) group at the wobble position (U34) of certain tRNAs, forming tRNA-cmnm(5)s(2)U34. The polypeptide is tRNA modification GTPase MnmE (Yersinia pseudotuberculosis serotype IB (strain PB1/+)).